We begin with the raw amino-acid sequence, 1227 residues long: DNA-directed RNA polymerase subunit beta' (1227 aa).

Zn(2+)-binding residues include Cys60, Cys62, Cys75, and Cys78. Mg(2+)-binding residues include Asp449, Asp451, and Asp453. Positions 847, 921, 928, and 931 each coordinate Zn(2+).

The protein belongs to the RNA polymerase beta' chain family. In terms of assembly, the RNAP catalytic core consists of 2 alpha, 1 beta, 1 beta' and 1 omega subunit. When a sigma factor is associated with the core the holoenzyme is formed, which can initiate transcription. It depends on Mg(2+) as a cofactor. Zn(2+) is required as a cofactor.

The catalysed reaction is RNA(n) + a ribonucleoside 5'-triphosphate = RNA(n+1) + diphosphate. In terms of biological role, DNA-dependent RNA polymerase catalyzes the transcription of DNA into RNA using the four ribonucleoside triphosphates as substrates. This Lysinibacillus sphaericus (strain C3-41) protein is DNA-directed RNA polymerase subunit beta'.